The primary structure comprises 531 residues: Arginine--tRNA ligase (531 aa).

Residues Ala113–His123 carry the 'HIGH' region motif.

Belongs to the class-I aminoacyl-tRNA synthetase family. In terms of assembly, monomer.

It is found in the cytoplasm. The catalysed reaction is tRNA(Arg) + L-arginine + ATP = L-arginyl-tRNA(Arg) + AMP + diphosphate. In Campylobacter lari (strain RM2100 / D67 / ATCC BAA-1060), this protein is Arginine--tRNA ligase.